The following is a 785-amino-acid chain: Conserved oligomeric Golgi complex subunit 4 (785 aa).

The tract at residues 1–24 (MADFDSPPKLSGVQPPSEGVGGGR) is disordered. N-acetylalanine is present on A2. Residues 2-84 (ADFDSPPKLS…VTLHRMGPNL (83 aa)) are interaction with SCFD1. Position 6 is a phosphoserine (S6). Residues 85 to 153 (QLIEGDAKQL…TALRNEDYEQ (69 aa)) form an interaction with STX5 region. Residues 618-740 (PQVQPWINSF…SQMATILNLE (123 aa)) are d domain. The segment at 741–785 (RVTEILDYWGPNSGPLTWRLTPAEVRQVLALRIDFRSEDIKRLRL) is e domain; essential for proper cell surface glycosylation.

Belongs to the COG4 family. As to quaternary structure, monomer. Component of the conserved oligomeric Golgi (COG) complex which is composed of eight different subunits and is required for normal Golgi morphology and localization. Mediates interaction of SCFD1 with the COG complex. Interacts with STX5.

The protein resides in the cytoplasm. It is found in the cytosol. Its subcellular location is the golgi apparatus membrane. Required for normal Golgi function. Plays a role in SNARE-pin assembly and Golgi-to-ER retrograde transport via its interaction with SCFD1. The polypeptide is Conserved oligomeric Golgi complex subunit 4 (COG4) (Pongo abelii (Sumatran orangutan)).